A 154-amino-acid chain; its full sequence is Ribonuclease H (154 aa).

Residues 5–147 form the RNase H type-1 domain; sequence GKSRVAIYTD…ADMLARGEVE (143 aa). 4 residues coordinate Mg(2+): D14, E53, D75, and D139.

Belongs to the RNase H family. In terms of assembly, monomer. Requires Mg(2+) as cofactor.

It localises to the cytoplasm. The catalysed reaction is Endonucleolytic cleavage to 5'-phosphomonoester.. Its function is as follows. Endonuclease that specifically degrades the RNA of RNA-DNA hybrids. The protein is Ribonuclease H of Anaplasma marginale (strain St. Maries).